Reading from the N-terminus, the 464-residue chain is Zinc transporter 6 (464 aa).

The Cytoplasmic portion of the chain corresponds to 1–33; that stretch reads MGTIYLFRKTQRSLLGKLTQEFRLVTADRRSWK. The chain crosses the membrane as a helical span at residues 34 to 54; sequence ILLFGAINVVCTGFLLTWCSS. Topologically, residues 55-64 are extracellular; it reads TNSMALTAYT. Residues 65-85 form a helical membrane-spanning segment; it reads YLTIFDLFSLITCLISYWVMM. The Cytoplasmic portion of the chain corresponds to 86–98; the sequence is KKPSPTYSFGFER. The helical transmembrane segment at 99 to 119 threads the bilayer; that stretch reads FEVLSVFASTVLAQLGALFIL. At 120–134 the chain is on the extracellular side; sequence KESAERFVEQPEIHT. Residues 135–155 traverse the membrane as a helical segment; the sequence is GRLLVGTFVALCFNLFSMLSI. The Cytoplasmic segment spans residues 156–200; the sequence is RNKPFAYVSEAASTSWLQEHVADLSRSLCGIIPGLSSIFLPRMNP. The helical transmembrane segment at 201–221 threads the bilayer; sequence FVLIDIAGALALCITYMLIEI. At 222-228 the chain is on the extracellular side; sequence NNYFAVD. The helical transmembrane segment at 229–249 threads the bilayer; it reads TASAIAIAVMTFGTMYPMSVY. The Cytoplasmic segment spans residues 250–464; the sequence is SGKVLLQTTP…TPGQFTQFKQ (215 aa).

Belongs to the cation diffusion facilitator (CDF) transporter (TC 2.A.4) family. SLC30A subfamily. Heterodimer with SLC30A5; form a functional zinc ion transmembrane transporter.

The protein resides in the golgi apparatus. It localises to the trans-Golgi network membrane. Functionally, has probably no intrinsic transporter activity but together with SLC30A5 forms a functional zinc ion:proton antiporter heterodimer, mediating zinc entry into the lumen of organelles along the secretory pathway. As part of that zinc ion:proton antiporter, contributes to zinc ion homeostasis within the early secretory pathway and regulates the activation and folding of enzymes like alkaline phosphatases and enzymes involved in phosphatidylinositol glycan anchor biosynthesis. In Xenopus tropicalis (Western clawed frog), this protein is Zinc transporter 6 (slc30a6).